The following is a 346-amino-acid chain: D-alanine--D-alanine ligase (346 aa).

The ATP-grasp domain occupies 133–327; sequence KLYAKSVGVK…ALADQISLEK (195 aa). 159–211 serves as a coordination point for ATP; that stretch reads LSFPCIIKPARLGSSIGISIVKDEKDLEYAKDVGFEFDNDLVVEEFKNNIKEY. The Mg(2+) site is built by Asp-284, Glu-296, and Asn-298.

The protein belongs to the D-alanine--D-alanine ligase family. The cofactor is Mg(2+). Mn(2+) is required as a cofactor.

Its subcellular location is the cytoplasm. The catalysed reaction is 2 D-alanine + ATP = D-alanyl-D-alanine + ADP + phosphate + H(+). It participates in cell wall biogenesis; peptidoglycan biosynthesis. In terms of biological role, cell wall formation. The sequence is that of D-alanine--D-alanine ligase from Campylobacter jejuni subsp. jejuni serotype O:2 (strain ATCC 700819 / NCTC 11168).